The primary structure comprises 80 residues: RNA-binding protein Hfq (80 aa).

Residues 10 to 70 (DLFLNTVRKQ…ISTIMPGQPM (61 aa)) form the Sm domain.

The protein belongs to the Hfq family. As to quaternary structure, homohexamer.

Its function is as follows. RNA chaperone that binds small regulatory RNA (sRNAs) and mRNAs to facilitate mRNA translational regulation in response to envelope stress, environmental stress and changes in metabolite concentrations. Also binds with high specificity to tRNAs. This Agrobacterium fabrum (strain C58 / ATCC 33970) (Agrobacterium tumefaciens (strain C58)) protein is RNA-binding protein Hfq.